We begin with the raw amino-acid sequence, 205 residues long: Small ribosomal subunit protein uS4 (205 aa).

The span at 1-16 shows a compositional bias: basic and acidic residues; it reads MSKRESSKYKIDRRMG. A disordered region spans residues 1–46; that stretch reads MSKRESSKYKIDRRMGENIWGRPKSPVNRREYGPGQHGQRRKSKLS. The 64-residue stretch at 94–157 folds into the S4 RNA-binding domain; that stretch reads SRLDAIVYRA…KQLVTVLEAV (64 aa).

It belongs to the universal ribosomal protein uS4 family. Part of the 30S ribosomal subunit. Contacts protein S5. The interaction surface between S4 and S5 is involved in control of translational fidelity.

One of the primary rRNA binding proteins, it binds directly to 16S rRNA where it nucleates assembly of the body of the 30S subunit. In terms of biological role, with S5 and S12 plays an important role in translational accuracy. This chain is Small ribosomal subunit protein uS4, found in Rhizobium meliloti (strain 1021) (Ensifer meliloti).